The primary structure comprises 2278 residues: Protein Ycf2 (2278 aa).

This sequence belongs to the Ycf2 family.

The protein resides in the plastid. The protein localises to the chloroplast stroma. It localises to the chromoplast stroma. Functionally, probable ATPase of unknown function. Its presence in a non-photosynthetic plant (Epifagus virginiana) and experiments in tobacco indicate that it has an essential function which is probably not related to photosynthesis. This is Protein Ycf2 (ycf2-A) from Solanum lycopersicum (Tomato).